Reading from the N-terminus, the 127-residue chain is Glycine cleavage system H protein 1 (127 aa).

The region spanning L20–R101 is the Lipoyl-binding domain. K60 is subject to N6-lipoyllysine.

It belongs to the GcvH family. As to quaternary structure, the glycine cleavage system is composed of four proteins: P, T, L and H. (R)-lipoate serves as cofactor.

Its function is as follows. The glycine cleavage system catalyzes the degradation of glycine. The H protein shuttles the methylamine group of glycine from the P protein to the T protein. The chain is Glycine cleavage system H protein 1 from Pseudomonas aeruginosa (strain ATCC 15692 / DSM 22644 / CIP 104116 / JCM 14847 / LMG 12228 / 1C / PRS 101 / PAO1).